Here is a 462-residue protein sequence, read N- to C-terminus: Alkaline ceramidase TOD1 (462 aa).

Topologically, residues 1-18 (MGKFITTTLSPPLYARSK) are cytoplasmic. Residues 19-39 (LLCFSLLYLFSTIFLFLYVSL) traverse the membrane as a helical segment. At 40–462 (SRNQCIFRYS…CKNYLTDMWG (423 aa)) the chain is on the lumenal side. Asn121, Asn132, and Asn449 each carry an N-linked (GlcNAc...) asparagine glycan.

This sequence belongs to the alkaline ceramidase family. As to expression, preferentially expressed in pollen grains, pollen tubes and silique guard cells, but barely detectable in roots, stems and leaves.

It is found in the golgi apparatus membrane. The catalysed reaction is an N-acylsphing-4-enine + H2O = sphing-4-enine + a fatty acid. It functions in the pathway lipid metabolism. Its function is as follows. Endoplasmic reticulum ceramidase that catalyzes the hydrolysis of ceramides into sphingosine and free fatty acids at alkaline pH (e.g. pH 9.5). Inactive on phytoceramide. Involved in the regulation of turgor pressure in guard cells and pollen tubes. The sequence is that of Alkaline ceramidase TOD1 from Arabidopsis thaliana (Mouse-ear cress).